A 433-amino-acid polypeptide reads, in one-letter code: L-lysine 2,3-aminomutase (433 aa).

Residues 122 to 334 (HRYPDRVLFY…SLIGHTTGFA (213 aa)) form the Radical SAM core domain. The [4Fe-4S] cluster site is built by Cys-136, Cys-140, and Cys-143. Cys-279 is a Zn(2+) binding site. The residue at position 348 (Lys-348) is an N6-(pyridoxal phosphate)lysine. The Zn(2+) site is built by Cys-389, Cys-392, and Cys-396.

The protein belongs to the radical SAM superfamily. KamA family. It depends on [4Fe-4S] cluster as a cofactor. Pyridoxal 5'-phosphate is required as a cofactor. Zn(2+) serves as cofactor.

The enzyme catalyses L-lysine = (3S)-3,6-diaminohexanoate. Functionally, catalyzes the interconversion of L-alpha-lysine and L-beta-lysine. Is involved in the biosynthesis pathway of N6-acetyl-beta-lysine, a compatible solute produced by methanogenic archaea that helps cells to cope with salt stress. This chain is L-lysine 2,3-aminomutase (ablA), found in Methanococcus maripaludis (strain DSM 14266 / JCM 13030 / NBRC 101832 / S2 / LL).